Consider the following 569-residue polypeptide: Peroxisomal targeting signal receptor (569 aa).

Cys5 is covalently cross-linked (Glycyl cysteine thioester (Cys-Gly) (interchain with G-Cter in ubiquitin)). An amphipathic helix 1 (AH1) region spans residues 6–28; it reads SVGANPLAQLNKRVQQDRTLQHG. A Glycyl lysine isopeptide (Lys-Gly) (interchain with G-Cter in ubiquitin) cross-link involves residue Lys17. The interval 53–71 is amphipathic helix 2 (AH2); the sequence is KFQMEQFMAGKASSGGNMF. The short motif at 112–116 is the WxxxF/Y motif 1 element; it reads WSQEF. The segment at 150–154 is amphipathic helix 3 (AH3); it reads PMNMM. A WxxxF/Y motif 2 motif is present at residues 181–185; it reads WEQQF. An amphipathic helix 4 (AH4) region spans residues 229 to 245; the sequence is FQQIWNDIHDQTDDLDS. 5 TPR repeats span residues 281–315, 316–349, 417–450, 452–484, and 486–518; these read NTDAYKIGCILMENGAKLSEAALAFEAAVQQDPGH, VDAWLRLGLVQTQNEKELSGINALEQCLKADPHN, PDVQLGLGILFYANEDFDKTIDCFRAALAVRPDD, CMWNRLGASLANSNRSEEAIQAYHRAIQLKPTF, and RARYNLAVSSMNIGCYREAAEHLLTALSMHEVE.

The protein belongs to the peroxisomal targeting signal receptor family. Interacts (via WxxxF/Y and LVxEF motifs) with PEX14; promoting translocation through the PEX13-PEX14 docking complex. Post-translationally, monoubiquitinated at Cys-5 by PEX2 during PEX5 passage through the retrotranslocation channel: monoubiquitination acts as a signal for PEX5 extraction and is required for proper export from peroxisomes and recycling. When PEX5 recycling is compromised, polyubiquitinated at Lys-17 by PEX10 during its passage through the retrotranslocation channel, leading to its degradation.

The protein localises to the cytoplasm. It localises to the cytosol. It is found in the peroxisome matrix. Receptor that mediates peroxisomal import of proteins containing a C-terminal PTS1-type tripeptide peroxisomal targeting signal (SKL-type). Binds to cargo proteins containing a PTS1 peroxisomal targeting signal in the cytosol, and translocates them into the peroxisome matrix by passing through the PEX13-PEX14 docking complex along with cargo proteins. PEX5 receptor is then retrotranslocated into the cytosol, leading to release of bound cargo in the peroxisome matrix, and reset for a subsequent peroxisome import cycle. This Eremothecium gossypii (strain ATCC 10895 / CBS 109.51 / FGSC 9923 / NRRL Y-1056) (Yeast) protein is Peroxisomal targeting signal receptor (PEX5).